Consider the following 288-residue polypeptide: Histone-lysine N-methyltransferase Suv4-20 (288 aa).

Residues 128–238 (QECKRYSQEG…PGDEITCFYG (111 aa)) enclose the SET domain.

This sequence belongs to the class V-like SAM-binding methyltransferase superfamily. Histone-lysine methyltransferase family. Suvar4-20 subfamily.

It localises to the nucleus. The protein localises to the chromosome. It catalyses the reaction N(6)-methyl-L-lysyl(20)-[histone H4] + S-adenosyl-L-methionine = N(6),N(6)-dimethyl-L-lysyl(20)-[histone H4] + S-adenosyl-L-homocysteine + H(+). It carries out the reaction N(6),N(6)-dimethyl-L-lysyl(20)-[histone H4] + S-adenosyl-L-methionine = N(6),N(6),N(6)-trimethyl-L-lysyl(20)-[histone H4] + S-adenosyl-L-homocysteine + H(+). Its function is as follows. Histone methyltransferase that specifically di- and trimethylates 'Lys-20' of histone H4 (H4K20me2/me3). H4 'Lys-20' trimethylation represents a specific tag for epigenetic transcriptional repression. Contributes to dosage compensation of X chromosome-relative to autosome-linked gene expression, possibly by converting H4K20me1 to H4K20m2/me3 on autosomes. Involved in the regulation of growth and body fat metabolism downstream of the TOR complex 2 pathway. The protein is Histone-lysine N-methyltransferase Suv4-20 (set-4) of Caenorhabditis elegans.